The primary structure comprises 410 residues: 3-phosphoshikimate 1-carboxyvinyltransferase (410 aa).

The 3-phosphoshikimate site is built by lysine 20, serine 21, and arginine 25. Lysine 20 lines the phosphoenolpyruvate pocket. Glycine 87 and arginine 115 together coordinate phosphoenolpyruvate. Serine 157, serine 158, glutamine 159, serine 183, aspartate 293, and lysine 320 together coordinate 3-phosphoshikimate. Glutamine 159 contributes to the phosphoenolpyruvate binding site. Residue aspartate 293 is the Proton acceptor of the active site. 3 residues coordinate phosphoenolpyruvate: arginine 324, arginine 365, and lysine 391.

This sequence belongs to the EPSP synthase family. As to quaternary structure, monomer.

It is found in the cytoplasm. The catalysed reaction is 3-phosphoshikimate + phosphoenolpyruvate = 5-O-(1-carboxyvinyl)-3-phosphoshikimate + phosphate. Its pathway is metabolic intermediate biosynthesis; chorismate biosynthesis. Functionally, catalyzes the transfer of the enolpyruvyl moiety of phosphoenolpyruvate (PEP) to the 5-hydroxyl of shikimate-3-phosphate (S3P) to produce enolpyruvyl shikimate-3-phosphate and inorganic phosphate. This chain is 3-phosphoshikimate 1-carboxyvinyltransferase, found in Thermoplasma volcanium (strain ATCC 51530 / DSM 4299 / JCM 9571 / NBRC 15438 / GSS1).